The sequence spans 535 residues: Succinate-semialdehyde dehydrogenase, mitochondrial (535 aa).

The transit peptide at 1–47 (MATCIWLRSCGARRLGSTFPGCRLRPRAGGLVPASGPAPGPAQLRCY) directs the protein to the mitochondrion. At Lys-126 the chain carries N6-acetyllysine; alternate. Position 126 is an N6-succinyllysine; alternate (Lys-126). Residues Lys-135 and Lys-184 each carry the N6-succinyllysine modification. An NAD(+)-binding site is contributed by 202 to 204 (TPW). Residue Arg-213 participates in substrate binding. 228-231 (KPAE) is an NAD(+) binding site. An N6-acetyllysine; alternate modification is found at Lys-265. The residue at position 265 (Lys-265) is an N6-succinyllysine; alternate. NAD(+)-binding positions include 284 to 289 (GSTTTG) and Glu-306. Catalysis depends on Glu-306, which acts as the Proton acceptor. Arg-334 lines the substrate pocket. Cys-340 (nucleophile) is an active-site residue. A disulfide bond links Cys-340 and Cys-342. Position 365 is an N6-acetyllysine (Lys-365). Lys-402 carries the N6-succinyllysine modification. Position 411 is an N6-acetyllysine (Lys-411). 438 to 440 (ETF) lines the NAD(+) pocket. Ser-498 contacts substrate. A Phosphoserine modification is found at Ser-499.

It belongs to the aldehyde dehydrogenase family. Homotetramer. As to expression, brain, pancreas, heart, liver, skeletal muscle and kidney. Lower in placenta.

The protein localises to the mitochondrion. It carries out the reaction succinate semialdehyde + NAD(+) + H2O = succinate + NADH + 2 H(+). It functions in the pathway amino-acid degradation; 4-aminobutanoate degradation. Redox-regulated. Inhibited under oxydizing conditions. Inhibited by hydrogen peroxide H(2)O(2). Its function is as follows. Catalyzes one step in the degradation of the inhibitory neurotransmitter gamma-aminobutyric acid (GABA). This Homo sapiens (Human) protein is Succinate-semialdehyde dehydrogenase, mitochondrial.